Consider the following 442-residue polypeptide: Trigger factor (442 aa).

The 84-residue stretch at 176–259 (GDFISLSLYV…VNAVIEISSP (84 aa)) folds into the PPIase FKBP-type domain.

It belongs to the FKBP-type PPIase family. Tig subfamily.

The protein localises to the cytoplasm. It carries out the reaction [protein]-peptidylproline (omega=180) = [protein]-peptidylproline (omega=0). Functionally, involved in protein export. Acts as a chaperone by maintaining the newly synthesized protein in an open conformation. Functions as a peptidyl-prolyl cis-trans isomerase. The chain is Trigger factor from Chlamydia trachomatis serovar L2 (strain ATCC VR-902B / DSM 19102 / 434/Bu).